The primary structure comprises 507 residues: Probable Xaa-Pro aminopeptidase TRV_02643 (507 aa).

The Mn(2+) site is built by Asp275, Asp286, Glu434, and Glu478.

This sequence belongs to the peptidase M24B family. Requires Mn(2+) as cofactor.

It catalyses the reaction Release of any N-terminal amino acid, including proline, that is linked to proline, even from a dipeptide or tripeptide.. Functionally, catalyzes the removal of a penultimate prolyl residue from the N-termini of peptides. In Trichophyton verrucosum (strain HKI 0517), this protein is Probable Xaa-Pro aminopeptidase TRV_02643.